The sequence spans 445 residues: GTPase Der (445 aa).

2 EngA-type G domains span residues 3-167 (PVIA…YAGQ) and 180-353 (IKIA…AAAM). Residues 9-16 (GRPNVGKS), 56-60 (DTGGF), 119-122 (NKAE), 186-193 (GRPNVGKS), 233-237 (DTAGL), and 298-301 (NKWD) contribute to the GTP site. The 85-residue stretch at 354-438 (AKLPTPKLTR…PLRIEFRSSN (85 aa)) folds into the KH-like domain.

The protein belongs to the TRAFAC class TrmE-Era-EngA-EngB-Septin-like GTPase superfamily. EngA (Der) GTPase family. In terms of assembly, associates with the 50S ribosomal subunit.

Its function is as follows. GTPase that plays an essential role in the late steps of ribosome biogenesis. The chain is GTPase Der from Burkholderia cenocepacia (strain HI2424).